We begin with the raw amino-acid sequence, 309 residues long: Carbamate kinase-like protein (309 aa).

A disordered region spans residues 125-144 (NKPVGPFYNTEETARSANPN).

The protein belongs to the carbamate kinase family.

This chain is Carbamate kinase-like protein, found in Mycoplasma pneumoniae (strain ATCC 29342 / M129 / Subtype 1) (Mycoplasmoides pneumoniae).